Consider the following 82-residue polypeptide: Putative defensin-like protein 191 (82 aa).

Residues 1–28 form the signal peptide; sequence MAKSVNATGFITYMVIFLILTGISRVKA. 4 cysteine pairs are disulfide-bonded: cysteine 33-cysteine 79, cysteine 46-cysteine 65, cysteine 51-cysteine 74, and cysteine 55-cysteine 76.

The protein belongs to the DEFL family.

The protein localises to the secreted. The chain is Putative defensin-like protein 191 from Arabidopsis thaliana (Mouse-ear cress).